Consider the following 270-residue polypeptide: Putative carbamate hydrolase RutD (270 aa).

Belongs to the AB hydrolase superfamily. Hydrolase RutD family.

The catalysed reaction is carbamate + 2 H(+) = NH4(+) + CO2. In terms of biological role, involved in pyrimidine catabolism. May facilitate the hydrolysis of carbamate, a reaction that can also occur spontaneously. This Escherichia coli O44:H18 (strain 042 / EAEC) protein is Putative carbamate hydrolase RutD.